The chain runs to 328 residues: DNA-directed RNA polymerase subunit alpha (328 aa).

An alpha N-terminal domain (alpha-NTD) region spans residues 1–235 (MQGSVTEFLK…EQLDAFVDLR (235 aa)). The alpha C-terminal domain (alpha-CTD) stretch occupies residues 249 to 328 (FDPILLRPVD…ENWPPASLAE (80 aa)).

The protein belongs to the RNA polymerase alpha chain family. As to quaternary structure, homodimer. The RNAP catalytic core consists of 2 alpha, 1 beta, 1 beta' and 1 omega subunit. When a sigma factor is associated with the core the holoenzyme is formed, which can initiate transcription.

It catalyses the reaction RNA(n) + a ribonucleoside 5'-triphosphate = RNA(n+1) + diphosphate. Its function is as follows. DNA-dependent RNA polymerase catalyzes the transcription of DNA into RNA using the four ribonucleoside triphosphates as substrates. The polypeptide is DNA-directed RNA polymerase subunit alpha (Pseudoalteromonas translucida (strain TAC 125)).